The primary structure comprises 72 residues: MEKLTSLLLVAALLMLTQTLIQGGGEDRPNKKFLQKIKSTAKRECTAPSGYCDYPEECCEVECGRHYCDWWY.

Positions 1 to 23 (MEKLTSLLLVAALLMLTQTLIQG) are cleaved as a signal peptide. Residues 24-41 (GGEDRPNKKFLQKIKSTA) constitute a propeptide that is removed on maturation. Intrachain disulfides connect Cys-45–Cys-59, Cys-52–Cys-63, and Cys-58–Cys-68.

It belongs to the conotoxin O2 superfamily. In terms of tissue distribution, expressed by the venom duct.

The protein resides in the secreted. This chain is Conotoxin LiC53, found in Conus lividus (Livid cone).